A 101-amino-acid chain; its full sequence is Small ribosomal subunit protein uS14 (101 aa).

The protein belongs to the universal ribosomal protein uS14 family. As to quaternary structure, part of the 30S ribosomal subunit. Contacts proteins S3 and S10.

In terms of biological role, binds 16S rRNA, required for the assembly of 30S particles and may also be responsible for determining the conformation of the 16S rRNA at the A site. The chain is Small ribosomal subunit protein uS14 from Psychrobacter arcticus (strain DSM 17307 / VKM B-2377 / 273-4).